The primary structure comprises 305 residues: UDP-3-O-acyl-N-acetylglucosamine deacetylase (305 aa).

Residues His-78, His-235, and Asp-239 each coordinate Zn(2+). His-262 acts as the Proton donor in catalysis.

Belongs to the LpxC family. The cofactor is Zn(2+).

The catalysed reaction is a UDP-3-O-[(3R)-3-hydroxyacyl]-N-acetyl-alpha-D-glucosamine + H2O = a UDP-3-O-[(3R)-3-hydroxyacyl]-alpha-D-glucosamine + acetate. It participates in glycolipid biosynthesis; lipid IV(A) biosynthesis; lipid IV(A) from (3R)-3-hydroxytetradecanoyl-[acyl-carrier-protein] and UDP-N-acetyl-alpha-D-glucosamine: step 2/6. Its function is as follows. Catalyzes the hydrolysis of UDP-3-O-myristoyl-N-acetylglucosamine to form UDP-3-O-myristoylglucosamine and acetate, the committed step in lipid A biosynthesis. This is UDP-3-O-acyl-N-acetylglucosamine deacetylase from Geobacter sp. (strain M21).